A 157-amino-acid chain; its full sequence is MQKIGIYPGTFDPVTNGHIDIIHRSSELFEKLIVAVAYSCAKNPMFSLKERLEMIQLATKGFKNVECVAFEGLLANLAKEYHCKVLVRGLRVVSDFEYELQMGYANKSLNHELETLYFMPTLQNAFISSSIVRSIIAHKGDASHLVPKEIHPFISKV.

T10 is a substrate binding site. ATP contacts are provided by residues 10 to 11 (TF) and H18. 3 residues coordinate substrate: K42, L74, and R88. ATP-binding positions include 89-91 (GLR), E99, and 124-130 (NAFISSS).

Belongs to the bacterial CoaD family. Homohexamer. Mg(2+) serves as cofactor.

The protein resides in the cytoplasm. The catalysed reaction is (R)-4'-phosphopantetheine + ATP + H(+) = 3'-dephospho-CoA + diphosphate. It participates in cofactor biosynthesis; coenzyme A biosynthesis; CoA from (R)-pantothenate: step 4/5. In terms of biological role, reversibly transfers an adenylyl group from ATP to 4'-phosphopantetheine, yielding dephospho-CoA (dPCoA) and pyrophosphate. This chain is Phosphopantetheine adenylyltransferase, found in Helicobacter pylori (strain Shi470).